We begin with the raw amino-acid sequence, 618 residues long: Keratin, type I cytoskeletal 9 (618 aa).

The interval 1 to 49 (MSFRQISSSFRSSSGSSCGGGGGRGASRGSMRSSFGRSSRAGGESRFGS) is disordered. The head stretch occupies residues 1 to 137 (MSFRQISSSF…GGEGSILNTN (137 aa)). The span at 7 to 16 (SSSFRSSSGS) shows a compositional bias: low complexity. Ser-14 and Ser-17 each carry phosphoserine. The segment covering 17–26 (SCGGGGGRGA) has biased composition (gly residues). Residues 27 to 49 (SRGSMRSSFGRSSRAGGESRFGS) show a composition bias toward low complexity. The segment at 138–173 (EKVVMQNLNSRLASYMDKVQELEEDNANLEKQIQEW) is coil 1A. In terms of domain architecture, IF rod spans 138–450 (EKVVMQNLNS…KLLEGGQQDF (313 aa)). Residues 174 to 192 (YSRKGNRVFQKDYSHYYNT) are linker 1. Positions 193–284 (IEDLKDRIVD…KSHKEEMNQL (92 aa)) are coil 1B. Residues 285 to 307 (TGLNDGDVNVEINVAPSTDLTQV) are linker 12. A coil 2 region spans residues 308–446 (LNDMREEYEH…ETYRKLLEGG (139 aa)). The segment at 447 to 609 (QQDFESSGAG…GGGNTRPSQS (163 aa)) is tail. The tract at residues 449–618 (DFESSGAGQI…SQSSQIPRLR (170 aa)) is disordered. Residues 456 to 603 (GQIGFGSGKG…GSGGSYGGGN (148 aa)) show a composition bias toward gly residues. A compositionally biased stretch (low complexity) spans 607-618 (SQSQSSQIPRLR).

Belongs to the intermediate filament family. As to quaternary structure, heterotetramer of two type I and two type II keratins. As to expression, expressed in the perinuclear ring of spermatid manchettes within testis and in keratinocytes of the suprabasal layer of footpad epidermis (at protein level).

Functionally, may serve an important special function either in the mature palmar and plantar skin tissue or in the morphogenetic program of the formation of these tissues. Plays a role in keratin filament assembly. May be involved in spermatid nuclear shaping and sperm development. This chain is Keratin, type I cytoskeletal 9 (Krt9), found in Rattus norvegicus (Rat).